Here is a 94-residue protein sequence, read N- to C-terminus: Protein S100-A1 (94 aa).

Glycine 2 carries the post-translational modification Blocked amino end (Gly). EF-hand domains follow at residues 13-48 (INVF…FLDA) and 50-85 (KDAD…LTVA). Positions 28, 33, 63, 65, 67, 69, and 74 each coordinate Ca(2+). Cysteine 86 is subject to S-nitrosocysteine.

Belongs to the S-100 family. Dimer of either two alpha chains, or two beta chains, or one alpha and one beta chain. Also forms heterodimers with S100P. Interacts with AGER. Interacts with CAPZA1. Interacts with FKBP4. Interacts with RYR1 and RYR2. Interacts with CACYBP in a calcium-dependent manner. Interacts with PPP5C (via TPR repeats); the interaction is calcium-dependent and modulates PPP5C activity. Interacts with ATP2A2 and PLN in a Ca(2+)-dependent manner. Interacts with mitochondrial F1-ATPase subunits ATP5F1A and ATP5F1B; these interactions increase F1-ATPase activity. Post-translationally, glutathionylated; glutathionylation increases affinity to calcium about 10-fold. As to expression, although predominant among the water-soluble brain proteins, S100 is also found in a variety of other tissues.

Its subcellular location is the cytoplasm. The protein localises to the sarcoplasmic reticulum. It is found in the mitochondrion. Functionally, small calcium binding protein that plays important roles in several biological processes such as Ca(2+) homeostasis, chondrocyte biology and cardiomyocyte regulation. In response to an increase in intracellular Ca(2+) levels, binds calcium which triggers conformational changes. These changes allow interactions with specific target proteins and modulate their activity. Regulates a network in cardiomyocytes controlling sarcoplasmic reticulum Ca(2+) cycling and mitochondrial function through interaction with the ryanodine receptors RYR1 and RYR2, sarcoplasmic reticulum Ca(2+)-ATPase/ATP2A2 and mitochondrial F1-ATPase. Facilitates diastolic Ca(2+) dissociation and myofilament mechanics in order to improve relaxation during diastole. This is Protein S100-A1 (S100A1) from Bos taurus (Bovine).